A 398-amino-acid chain; its full sequence is Putative F-box/kelch-repeat protein At2g29780 (398 aa).

Residues 1 to 46 (MAIISETSDDGSHGGVPNKKPEELHKNPKEDDHQEEEVENHPPIPR) are disordered. Positions 19–32 (KKPEELHKNPKEDD) are enriched in basic and acidic residues. Residues 43–90 (PIPRQIPQALIRRTVALIKRCHYPSLSLLSKAFRIVISSPELHQTRSS) form the F-box domain. 4 Kelch repeats span residues 148–195 (KMYV…VING), 196–241 (KIYV…GFVT), 243–289 (VVMQ…VIED), and 295–342 (DPYC…GGKL).

In Arabidopsis thaliana (Mouse-ear cress), this protein is Putative F-box/kelch-repeat protein At2g29780.